Consider the following 290-residue polypeptide: Carbonic anhydrase-related protein (290 aa).

Residues M1–G26 form a disordered region. S5 is modified (phosphoserine). The segment covering K16–G26 has biased composition (acidic residues). An Alpha-carbonic anhydrase domain is found at V27 to F289. Catalysis depends on H87, which acts as the Proton donor/acceptor. Residues H118 and H141 each coordinate Zn(2+).

This sequence belongs to the alpha-carbonic anhydrase family.

In terms of biological role, does not have a carbonic anhydrase catalytic activity. In Homo sapiens (Human), this protein is Carbonic anhydrase-related protein (CA8).